A 120-amino-acid polypeptide reads, in one-letter code: Non-specific lipid-transfer protein (120 aa).

The first 26 residues, 1 to 26 (MASSMSLKLACVVVLCMVVGAPLAQG), serve as a signal peptide directing secretion. 3 cysteine pairs are disulfide-bonded: cysteine 40-cysteine 56, cysteine 57-cysteine 102, and cysteine 77-cysteine 116.

It belongs to the plant LTP family.

Plant non-specific lipid-transfer proteins transfer phospholipids as well as galactolipids across membranes. May play a role in wax or cutin deposition in the cell walls of expanding epidermal cells and certain secretory tissues. In Gossypium hirsutum (Upland cotton), this protein is Non-specific lipid-transfer protein.